Consider the following 315-residue polypeptide: Ankyrin repeat domain-containing protein EMB506, chloroplastic (315 aa).

Residues 1–39 constitute a chloroplast transit peptide; the sequence is MVSSVLSIPPQTCLLPRLPISDSVNCKSKIVYCLSTSVR. A compositionally biased stretch (polar residues) spans 44–65; the sequence is KRQSTARTRSFTETNRRTPSVQ. The interval 44-106 is disordered; the sequence is KRQSTARTRS…DNESDWEDDS (63 aa). Over residues 72–104 the composition is skewed to acidic residues; sequence EDPDDGSDSENEYEGEEEDGIGNDLDNESDWED. 5 ANK repeats span residues 151–180, 184–213, 217–246, 250–279, and 283–307; these read KSWK…DIDD, DNQT…NPHL, DGAA…DVNV, EGWT…DKTR, and DGKL…VKLL.

Interacts with AKR. No homodimerization observed. As to expression, expressed in roots, inflorescence stems, flowers, siliques, dry seeds and mature cauline leaves.

The protein localises to the plastid. It localises to the chloroplast. In terms of biological role, involved in the initial differentiation of the proplastid during the embryo development. Also required for correct cotyledon, true leaf and cauline leaf margin development. This Arabidopsis thaliana (Mouse-ear cress) protein is Ankyrin repeat domain-containing protein EMB506, chloroplastic (EMB506).